The following is a 118-amino-acid chain: Transmembrane protein 243 (118 aa).

The residue at position 1 (M1) is an N-acetylmethionine. Transmembrane regions (helical) follow at residues 32–52, 62–82, and 94–114; these read LVVG…AFVF, IFFA…IYWY, and LIYY…LYFH.

The protein belongs to the TMEM243 family. In terms of tissue distribution, widely expressed.

Its subcellular location is the membrane. The protein is Transmembrane protein 243 (TMEM243) of Homo sapiens (Human).